Here is an 835-residue protein sequence, read N- to C-terminus: Transcription intermediary factor 1-beta (835 aa).

The span at 14-24 shows a compositional bias: low complexity; sequence AATAASAASGS. The tract at residues 14–57 is disordered; sequence AATAASAASGSPGSGEGSAGGEKRPAASSAAAASASASSPAGGG. A phosphoserine mark is found at Ser-24, Ser-27, and Ser-31. Residue Lys-36 forms a Glycyl lysine isopeptide (Lys-Gly) (interchain with G-Cter in SUMO2) linkage. A compositionally biased stretch (low complexity) spans 39 to 53; the sequence is AASSAAAASASASSP. The residue at position 52 (Ser-52) is a Phosphoserine. The segment at 67–123 adopts an RING-type zinc-finger fold; sequence CGVCRERLRPERDPRLLPCLHSACSACLGPATPAAANNSGDGGSAGDGAMVDCPVCK. A Glycyl lysine isopeptide (Lys-Gly) (interchain with G-Cter in SUMO2) cross-link involves residue Lys-129. Position 140 is a phosphoserine (Ser-140). The segment at 150 to 197 adopts a B box-type 1; atypical zinc-finger fold; the sequence is DANQCCTSCEDNAPATSYCVECSEPLCETCVEAHQRVKYTKDHTVRST. Residues Cys-155, Cys-158, Cys-179, and His-183 each coordinate Zn(2+). Lys-201 is covalently cross-linked (Glycyl lysine isopeptide (Lys-Gly) (interchain with G-Cter in SUMO2)). The B box-type 2 zinc-finger motif lies at 206–247; that stretch reads ERTVYCNVHKHEPLVLFCESCDTLTCRDCQLNAHKDHQYQFL. Zn(2+)-binding residues include Cys-211, His-214, Cys-234, and His-239. The tract at residues 248-378 is leucine zipper alpha helical coiled-coil region; sequence EDAVRNQRKL…LIYFQLHRAL (131 aa). The interaction with MAGEC2 stretch occupies residues 249–378; it reads DAVRNQRKLL…LIYFQLHRAL (130 aa). Glycyl lysine isopeptide (Lys-Gly) (interchain with G-Cter in SUMO2) cross-links involve residues Lys-256 and Lys-263. An N6-acetyllysine modification is found at Lys-268. A Glycyl lysine isopeptide (Lys-Gly) (interchain with G-Cter in SUMO2) cross-link involves residue Lys-274. At Lys-306 the chain carries N6-acetyllysine; alternate. Lys-306 is covalently cross-linked (Glycyl lysine isopeptide (Lys-Gly) (interchain with G-Cter in SUMO2); alternate). A Glycyl lysine isopeptide (Lys-Gly) (interchain with G-Cter in SUMO2) cross-link involves residue Lys-321. Position 342 is an N6-acetyllysine (Lys-342). A Glycyl lysine isopeptide (Lys-Gly) (interchain with G-Cter in SUMO2) cross-link involves residue Lys-368. The interval 368–372 is involved in binding PPP1CA; it reads KLIYF. N6-acetyllysine; alternate is present on Lys-379. A Glycyl lysine isopeptide (Lys-Gly) (interchain with G-Cter in SUMO2); alternate cross-link involves residue Lys-379. Lys-379 participates in a covalent cross-link: Glycyl lysine isopeptide (Lys-Gly) (interchain with G-Cter in SUMO1); alternate. Residue Lys-409 forms a Glycyl lysine isopeptide (Lys-Gly) (interchain with G-Cter in SUMO2) linkage. The segment at 413–481 is disordered; sequence ERPGTNSTGP…SRSGEGEVSG (69 aa). The residue at position 419 (Ser-419) is a Phosphoserine. Lys-436 participates in a covalent cross-link: Glycyl lysine isopeptide (Lys-Gly) (interchain with G-Cter in SUMO2). Polar residues predominate over residues 436–445; it reads KQGSGSSQPM. 2 positions are modified to phosphoserine: Ser-439 and Ser-441. Lys-470 participates in a covalent cross-link: Glycyl lysine isopeptide (Lys-Gly) (interchain with G-Cter in SUMO2); alternate. A Glycyl lysine isopeptide (Lys-Gly) (interchain with G-Cter in SUMO1); alternate cross-link involves residue Lys-470. Arg-471 carries the citrulline modification. The residue at position 472 (Ser-472) is a Phosphoserine. Residue Arg-473 is modified to Citrulline. Ser-474, Ser-480, and Ser-490 each carry phosphoserine. The interval 477 to 514 is HP1 box; it reads GEVSGLMRKVPRVSLERLDLDLTSDSQPPVFKVFPGST. The PxVxL motif motif lies at 482-495; the sequence is LMRKVPRVSLERLD. Phosphothreonine is present on Thr-499. At Ser-502 the chain carries Phosphoserine. Lys-508 is covalently cross-linked (Glycyl lysine isopeptide (Lys-Gly) (interchain with G-Cter in SUMO2)). Residue Lys-555 forms a Glycyl lysine isopeptide (Lys-Gly) (interchain with G-Cter in SUMO2); alternate linkage. A Glycyl lysine isopeptide (Lys-Gly) (interchain with G-Cter in SUMO); alternate cross-link involves residue Lys-555. Lys-576 is covalently cross-linked (Glycyl lysine isopeptide (Lys-Gly) (interchain with G-Cter in SUMO2)). Ser-595 carries the post-translational modification Phosphoserine. The PHD-type zinc-finger motif lies at 626 to 673; it reads ATICRVCQKPGDLVMCNQCEFCFHLDCHLPSLQDVPGEEWSCSLCHVL. Lys-677 is covalently cross-linked (Glycyl lysine isopeptide (Lys-Gly) (interchain with G-Cter in SUMO)). Ser-684, Ser-690, and Ser-698 each carry phosphoserine. In terms of domain architecture, Bromo spans 696-800; that stretch reads KLSPANQRKC…RFFETRMNDA (105 aa). A Glycyl lysine isopeptide (Lys-Gly) (interchain with G-Cter in SUMO2); alternate cross-link involves residue Lys-751. Lys-751 is covalently cross-linked (Glycyl lysine isopeptide (Lys-Gly) (interchain with G-Cter in SUMO1); alternate). Residue Lys-751 forms a Glycyl lysine isopeptide (Lys-Gly) (interchain with G-Cter in SUMO); alternate linkage. Phosphoserine is present on Ser-753. Tyr-756 bears the Phosphotyrosine mark. Position 758 is a phosphoserine (Ser-758). An N6-acetyllysine; alternate mark is found at Lys-771, Lys-775, and Lys-780. Residues Lys-771, Lys-775, and Lys-780 each participate in a glycyl lysine isopeptide (Lys-Gly) (interchain with G-Cter in SUMO2); alternate cross-link. A Glycyl lysine isopeptide (Lys-Gly) (interchain with G-Cter in SUMO1); alternate cross-link involves residue Lys-780. Ser-785 carries the phosphoserine modification. Lys-805 participates in a covalent cross-link: Glycyl lysine isopeptide (Lys-Gly) (interchain with G-Cter in SUMO2). At Ser-825 the chain carries Phosphoserine; by ATM and ATR and dsDNA kinase.

The protein belongs to the TRIM/RBCC family. As to quaternary structure, interacts with ZNF382. Interacts with SETX. Oligomer; the RBCC domain homotrimerizes and interacts with one molecule of KRAB to form the KRAB-KAP1 corepressor complex. Binding to a KRAB domain is an absolute requirement for silencing gene expression. Interacts with CEBPB and NR3C1. Interacts with a number of KRAB-ZFP proteins including ZNF10, ZFP53, ZFP68 and ZNF256. Interacts with NCOR1, NR3C1 and CHD3. Interacts with CEBPB (via the RING-type and PHD-type zinc fingers). Component of a ternary complex that includes TRIM28, a HP1 protein (CBX1, CBX3 OR CBX5), a KRAB domain-containing protein, and DNA. Interacts with CBX5 (via the PxVxL motif); the interaction occurs in interphase nuclei and competes for binding POGZ. Interacts with POGZ; the interaction competes for interaction with CBX5. Interacts with SETDB1; the interaction is enhanced by KAP1 sumoylation, stimulates SETDB1 histone methyltransferase activity and gene silencing. Interacts (via the PHD-type zinc finger) with UBE2I; the interaction is required for sumoylation and repressor activity. Component of the TRIM28/KAP1-ERBB4-MDM2 complex involved in connecting growth factor and DNA damage responses. Interacts directly with ERBB4; the interaction represses ERBB4-mediated transcription activity. Interacts with MDM2; the interaction contributes to p53/TP53 inactivation. Component of the TRIM28/KAP1-MDM2-p53/TP53; involved in regulating p53/TP53 stabilization and activity. Interacts (via the leucine zipper alpha helical coiled-coil) with E2F1 (central region); the interaction inhibits E2F1 acetylation and transcriptional activity. Interacts with PPP1CA; the interaction dephosphorylates TRIM28 at Ser-824 and forms a complex at the p21 promoter site. Interacts with PPP1CB; the interaction is weak but is increased on dephosphorylation at Ser-824. Interacts with SMARCAD1. Interacts with, and sumoylates IRF7. Interacts with MAGEC2. Part of a complex composed of TRIM28, HDAC1, HDAC2 and EHMT2. Interacts with AICDA. The large PER complex involved in the histone methylation is composed of at least PER2, CBX3, TRIM28, SUV39H1 and/or SUV39H2; CBX3 mediates the formation of the complex. Interacts with NR4A3; the interactions potentiates NR4A3 activity on NurRE promoter. Interacts (unphosphorylated or phosphorylated form) with ZBTB1 (via BTB domain). Probably part of a corepressor complex containing ZNF304, TRIM28, SETDB1 and DNMT1. Interacts with ATRX. Forms a complex with ATRX, SETDB1 and ZNF274. Interacts with ZFP568; the interaction mediates ZFP568 transcriptional repression activity. Interacts with RRP1B. Interacts with CRY1. Interacts with ZNF263; recruited to the SIX3 promoter along with other proteins involved in chromatin modification and transcriptional corepression where it contributes to transcriptional repression. Interacts with CYREN (via XLF motif). Interacts with TRIM17; this interaction prevents TRIM28 activity. Interacts with ZNF746. Interacts with PHF13. Interacts with ZNF354C. Interacts with ZNF432; the interaction is independent of PARP1. Post-translationally, ATM-induced phosphorylation on Ser-825 represses sumoylation leading to the de-repression of expression of a subset of genes involved in cell cycle control and apoptosis in response to genotoxic stress. Dephosphorylation by the phosphatases, PPP1CA and PP1CB forms, allows sumoylation and expression of TRIM28 target genes. In terms of processing, sumoylation/desumoylation events regulate TRIM28-mediated transcriptional repression. Sumoylation is required for interaction with CHD3 and SETDB1 and the corepressor activity. Represses and is repressed by Ser-824 phosphorylation. Enhances the TRIM28 corepressor activity, inhibiting transcriptional activity of a number of genes including GADD45A and CDKN1A/p21. Lys-555, Lys-780 and Lys-805 are the major sites of sumoylation. In response to Dox-induced DNA damage, enhanced phosphorylation on Ser-825 prevents sumoylation and allows de-repression of CDKN1A/p21. Auto-ubiquitinated; enhanced by MAGEA2 and MAGEC2. Post-translationally, citrullinated by PADI4. In terms of processing, ADP-ribosylated by SIRT6, promoting TRIM28/KAP1 interaction with CBX5, thereby contributing to the packaging of LINE-1 retrotransposon elements into transcriptionally repressive heterochromatin.

It is found in the nucleus. The enzyme catalyses S-ubiquitinyl-[E2 ubiquitin-conjugating enzyme]-L-cysteine + [acceptor protein]-L-lysine = [E2 ubiquitin-conjugating enzyme]-L-cysteine + N(6)-ubiquitinyl-[acceptor protein]-L-lysine.. The protein operates within protein modification; protein sumoylation. Nuclear corepressor for KRAB domain-containing zinc finger proteins (KRAB-ZFPs). Mediates gene silencing by recruiting CHD3, a subunit of the nucleosome remodeling and deacetylation (NuRD) complex, and SETDB1 (which specifically methylates histone H3 at 'Lys-9' (H3K9me)) to the promoter regions of KRAB target genes. Enhances transcriptional repression by coordinating the increase in H3K9me, the decrease in histone H3 'Lys-9 and 'Lys-14' acetylation (H3K9ac and H3K14ac, respectively) and the disposition of HP1 proteins to silence gene expression. Recruitment of SETDB1 induces heterochromatinization. May play a role as a coactivator for CEBPB and NR3C1 in the transcriptional activation of ORM1. Also a corepressor for ERBB4. Inhibits E2F1 activity by stimulating E2F1-HDAC1 complex formation and inhibiting E2F1 acetylation. May serve as a partial backup to prevent E2F1-mediated apoptosis in the absence of RB1. Important regulator of CDKN1A/p21(CIP1). Has E3 SUMO-protein ligase activity toward itself via its PHD-type zinc finger. Also specifically sumoylates IRF7, thereby inhibiting its transactivation activity. Ubiquitinates p53/TP53 leading to its proteasomal degradation; the function is enhanced by MAGEC2 and MAGEA2, and possibly MAGEA3 and MAGEA6. Mediates the nuclear localization of KOX1, ZNF268 and ZNF300 transcription factors. In association with isoform 2 of ZFP90, is required for the transcriptional repressor activity of FOXP3 and the suppressive function of regulatory T-cells (Treg). Probably forms a corepressor complex required for activated KRAS-mediated promoter hypermethylation and transcriptional silencing of tumor suppressor genes (TSGs) or other tumor-related genes in colorectal cancer (CRC) cells. Required to maintain a transcriptionally repressive state of genes in undifferentiated embryonic stem cells (ESCs). In ESCs, in collaboration with SETDB1, is also required for H3K9me3 and silencing of endogenous and introduced retroviruses in a DNA-methylation independent-pathway. Associates at promoter regions of tumor suppressor genes (TSGs) leading to their gene silencing. The SETDB1-TRIM28-ZNF274 complex may play a role in recruiting ATRX to the 3'-exons of zinc finger genes with atypical chromatin signatures to establish or maintain/protect H3K9me3 at these transcriptionally active regions. This chain is Transcription intermediary factor 1-beta, found in Rattus norvegicus (Rat).